A 247-amino-acid polypeptide reads, in one-letter code: Nodulation protein H (247 aa).

The segment at 1-17 (MTHSTLPPQPFAILAMP) is hydrophobic.

In terms of biological role, required for the formation of sulfated nod factor. Proposed to transfer activated sulfate (PAPS) to a N-acetylglucosamine of the nod factor. In Rhizobium meliloti (strain 1021) (Ensifer meliloti), this protein is Nodulation protein H (nodH).